The primary structure comprises 484 residues: FAD-dependent monooxygenase aurC (484 aa).

The signal sequence occupies residues 1-21 (MGAYSFRVIIVGGSITGMTLA). FAD-binding residues include E35, G49, and R108. Y216 is an active-site residue. FAD contacts are provided by D308 and G321. A helical membrane pass occupies residues 451 to 471 (FAVASLIVLIVVLARALDSPA).

This sequence belongs to the paxM FAD-dependent monooxygenase family. It depends on FAD as a cofactor.

The protein localises to the membrane. Its pathway is polyketide biosynthesis. FAD-dependent monooxygenase; part of the gene cluster that mediates the biosynthesis of aurovertins, fungal polyketides that exhibit potent inhibition of adenosine triphosphate synthase. Tha biosynthesis starts with the HR-PKS aurA that selects propionate as the starter unit; synthesizes a hexa-ene chain through the repeated functions of the KR and DH domains in the first six iterations; selectively introduces three alpha-methyl substitutions at C4, C6, and C16 using the S-adensylmethionine-dependent cMET; and shuts off KR and DH in the last three iterations to afford a 1,3,5-triketo portion that can undergo intramolecular cyclization to yield the alpha-pyrone intermediate. AurE may act as a cyclase and enhances the rate of pyrone formation and product release of aurA. The methyltransferase aurB then methylates the C17 hydroxyl group. C17 methylation is required to initiate epoxidation by the downstream monooxygenase aurC. The monooxygenase aurC and the epoxide hydrolase aurD can iteratively transform the terminal triene portion of the methylated precursor into the dioxabicyclo[3.2.1]octane scaffold of aurovertin E. Epoxidation modifications of the precursor occur in two separate steps; bis-epoxidation of the two terminal olefins takes place first, followed by another epoxidation that occurs at C7-C8 after tetrahydrofuran formation. The O-acyltransferase aurG converts aurovertin E to aurovertin A. The chain is FAD-dependent monooxygenase aurC from Calcarisporium arbuscula (Dendryphion arbuscula).